We begin with the raw amino-acid sequence, 447 residues long: Na(+)-translocating NADH-quinone reductase subunit A (447 aa).

Belongs to the NqrA family. Composed of six subunits; NqrA, NqrB, NqrC, NqrD, NqrE and NqrF.

The enzyme catalyses a ubiquinone + n Na(+)(in) + NADH + H(+) = a ubiquinol + n Na(+)(out) + NAD(+). Functionally, NQR complex catalyzes the reduction of ubiquinone-1 to ubiquinol by two successive reactions, coupled with the transport of Na(+) ions from the cytoplasm to the periplasm. NqrA to NqrE are probably involved in the second step, the conversion of ubisemiquinone to ubiquinol. This Haemophilus influenzae (strain PittEE) protein is Na(+)-translocating NADH-quinone reductase subunit A.